The chain runs to 86 residues: UPF0147 protein PYRAB16980 (86 aa).

This sequence belongs to the UPF0147 family.

This chain is UPF0147 protein PYRAB16980, found in Pyrococcus abyssi (strain GE5 / Orsay).